Here is a 325-residue protein sequence, read N- to C-terminus: Interleukin-10 receptor subunit beta (325 aa).

The N-terminal stretch at 1 to 19 (MAWSLGSWLGGCLLVSALG) is a signal peptide. Topologically, residues 20–220 (MVPPPENVRM…QTTHDETVPS (201 aa)) are extracellular. 2 consecutive Fibronectin type-III domains span residues 23 to 111 (PPEN…VDDT) and 114 to 216 (GPPG…THDE). Asn49, Asn68, Asn102, and Asn161 each carry an N-linked (GlcNAc...) asparagine glycan. A disulfide bridge connects residues Cys66 and Cys74. A disulfide bond links Cys188 and Cys209. Residues 221–242 (WMVAVILMASVFMVCLALLGCF) traverse the membrane as a helical segment. Residues 243–325 (ALLWCVYKKT…GTPPGQGPQS (83 aa)) lie on the Cytoplasmic side of the membrane. The tract at residues 301–325 (DSESGKQNPGDSCSLGTPPGQGPQS) is disordered. Positions 305–315 (GKQNPGDSCSL) are enriched in polar residues.

The protein belongs to the type II cytokine receptor family. In terms of assembly, heterodimer with IFNLR1.

It localises to the membrane. Functionally, shared cell surface receptor required for the activation of five class 2 cytokines: IL10, IL22, IL26, IL28, and IFNL1. The IFNLR1/IL10RB dimer is a receptor for the cytokine ligands IFNL2 and IFNL3 and mediates their antiviral activity. The ligand/receptor complex stimulate the activation of the JAK/STAT signaling pathway leading to the expression of IFN-stimulated genes (ISG), which contribute to the antiviral state. The chain is Interleukin-10 receptor subunit beta (IL10RB) from Homo sapiens (Human).